We begin with the raw amino-acid sequence, 238 residues long: ATP synthase subunit a, chloroplastic (238 aa).

Transmembrane regions (helical) follow at residues 27–47, 86–106, 125–145, 190–210, and 211–231; these read GQVLITSWVVLGILAVLSFLG, VPFLGTIFLFIFVSNWSGALL, INTTVALALLTSISYFYAGIS, LVVGVLVALVPLIIPIPIMLL, and GVFTSAIQALVFATLAGAYIN.

The protein belongs to the ATPase A chain family. F-type ATPases have 2 components, F(1) - the catalytic core - and F(0) - the membrane proton channel. F(1) has five subunits: alpha(3), beta(3), gamma(1), delta(1), epsilon(1). F(0) has four main subunits: a(1), b(1), b'(1) and c(10-14). The alpha and beta chains form an alternating ring which encloses part of the gamma chain. F(1) is attached to F(0) by a central stalk formed by the gamma and epsilon chains, while a peripheral stalk is formed by the delta, b and b' chains.

The protein resides in the plastid. The protein localises to the chloroplast thylakoid membrane. In terms of biological role, f(1)F(0) ATP synthase produces ATP from ADP in the presence of a proton or sodium gradient. F-type ATPases consist of two structural domains, F(1) containing the extramembraneous catalytic core and F(0) containing the membrane proton channel, linked together by a central stalk and a peripheral stalk. During catalysis, ATP synthesis in the catalytic domain of F(1) is coupled via a rotary mechanism of the central stalk subunits to proton translocation. The chain is ATP synthase subunit a, chloroplastic from Chlamydomonas reinhardtii (Chlamydomonas smithii).